Here is a 368-residue protein sequence, read N- to C-terminus: DNA replication and repair protein RecF (368 aa).

Residue 30 to 37 (GNNAQGKT) coordinates ATP.

The protein belongs to the RecF family.

It localises to the cytoplasm. Functionally, the RecF protein is involved in DNA metabolism; it is required for DNA replication and normal SOS inducibility. RecF binds preferentially to single-stranded, linear DNA. It also seems to bind ATP. This Streptococcus pyogenes serotype M18 (strain MGAS8232) protein is DNA replication and repair protein RecF.